We begin with the raw amino-acid sequence, 670 residues long: MMPFIEIDHVDRIFPLPDGGRYIALKNIELKISQGEFISLIGHSGCGKSTLLNMISGLDKPTFGGVIMEGKEITEPGPERMVVFQNYSLLPWLTVRQNIALAVNRVLRDLPKPEQEKIIDDNIALVGLQRAAHKRPGELSGGMKQRVAIARALSTRPKVLLLDEPFGALDALTRGNLQERLMEIVQESGVTCIMVTHDVDEALLLSDRVVMLTTGPEAHIGQILEVPIPRPRHRLEVVNHPSYYALRGEMVYFLNQQKRAKKVGAVSQFAEAMGGNGLEKINLDLGFIPLTDCAPLVVAKEKGFFQKHGLEQVNLVKEPSWQAIADGIRERRLDGAQMVAGMPLALTLGMGGKTPLPMVTAMVMSRNGNAITLSKKFAEAGVKTLEDLRLKLAETPDQVSTLGMVHPASMQNLLLRYWLASGSIDPDQDINLMRLPPPQMVSNLEAGNIDGFCVGEPWNSYAVKQNLGYVIATDLDIWNGHPEKVLGMREEWVNKYPATHLALVKALLEACEYCDDRRHRQEILDYLALPQYVGTSTEYISPGFLTEYDQGNDAEAEMLLDFNQFYVKQSNYPSRSEGLWILTQLARWGYIDFPKNWVEIIERVRRPDLFGEACRHLGWPDLEGDHHNVSLFDGMVFTPNDPLGYIKRFTIHRDIQVTEILIDQIDQVNQ.

The ABC transporter domain maps to 5 to 239 (IEIDHVDRIF…RPRHRLEVVN (235 aa)). 42 to 49 (GHSGCGKS) is a binding site for ATP. Positions 255 to 278 (NQQKRAKKVGAVSQFAEAMGGNGL) are linker. The nrtA-like stretch occupies residues 279–670 (EKINLDLGFI…LIDQIDQVNQ (392 aa)).

Belongs to the ABC transporter superfamily. Nitrate/nitrite/cyanate uptake transporter (NitT) (TC 3.A.1.16) family. In terms of assembly, the complex is composed of two ATP-binding proteins (NrtC and NrtD), two transmembrane proteins (NrtB) and a solute-binding protein (NrtA).

The protein resides in the cell inner membrane. It catalyses the reaction nitrate(out) + ATP + H2O = nitrate(in) + ADP + phosphate + H(+). Its function is as follows. Part of the ABC transporter complex NrtABCD involved in nitrate uptake. The complex is probably also involved in nitrite transport. Probably responsible for energy coupling to the transport system. This chain is Nitrate import ATP-binding protein NrtC (nrtC), found in Synechocystis sp. (strain ATCC 27184 / PCC 6803 / Kazusa).